The chain runs to 235 residues: Caveolin-1 (235 aa).

Residues M1–T161 are Cytoplasmic-facing. Positions G29–K72 are disordered. An intramembrane region (helical) is located at residues I162–L182. At G183–V235 the chain is on the cytoplasmic side. The S-palmitoyl cysteine moiety is linked to residue C234.

It belongs to the caveolin family. Homooligomer containing 14-16 monomers per oligomer.

It localises to the golgi apparatus membrane. The protein localises to the cell membrane. The protein resides in the membrane. It is found in the caveola. Its function is as follows. May act as a scaffolding protein within caveolar membranes. Interacts directly with G-protein alpha subunits and can functionally regulate their activity. This is Caveolin-1 (cav-1) from Caenorhabditis elegans.